Reading from the N-terminus, the 234-residue chain is MGTSVSKPVSDDKKKGTSVSKPVKNIVLVGRSVNGICTTGNNILGQNKFGSEGAFMHCQMYSTTTPDGQMINVIKTPGMFDLSVSEDYISKEIINCLTLAEEGVHAVLFVLSMKNRITQEEEYALNTLQRIFGSKILEYLIFLLIDGEKFEAKEFEDYFPECCPEFLMRVLRFCNGRKVLFNNMTNDEGVKAEQVNQVMAHVAAISKKNDEKPYTEDMYRNIKVNTFFSLIAFI.

The region spanning K21–K223 is the AIG1-type G domain. Residues G30–T38, S51, and N183 contribute to the GTP site.

It belongs to the TRAFAC class TrmE-Era-EngA-EngB-Septin-like GTPase superfamily. AIG1/Toc34/Toc159-like paraseptin GTPase family. IAN subfamily. Mostly expressed in pollen. Also detected in lateral roots and radicles.

This Arabidopsis thaliana (Mouse-ear cress) protein is Immune-associated nucleotide-binding protein 2.